We begin with the raw amino-acid sequence, 313 residues long: Porphobilinogen deaminase (313 aa).

C241 carries the S-(dipyrrolylmethanemethyl)cysteine modification.

The protein belongs to the HMBS family. As to quaternary structure, monomer. The cofactor is dipyrromethane.

It catalyses the reaction 4 porphobilinogen + H2O = hydroxymethylbilane + 4 NH4(+). It functions in the pathway porphyrin-containing compound metabolism; protoporphyrin-IX biosynthesis; coproporphyrinogen-III from 5-aminolevulinate: step 2/4. Its function is as follows. Tetrapolymerization of the monopyrrole PBG into the hydroxymethylbilane pre-uroporphyrinogen in several discrete steps. In Bacillus velezensis (strain DSM 23117 / BGSC 10A6 / LMG 26770 / FZB42) (Bacillus amyloliquefaciens subsp. plantarum), this protein is Porphobilinogen deaminase.